The chain runs to 962 residues: Glycine dehydrogenase (decarboxylating) (962 aa).

Residue K709 is modified to N6-(pyridoxal phosphate)lysine.

The protein belongs to the GcvP family. The glycine cleavage system is composed of four proteins: P, T, L and H. Pyridoxal 5'-phosphate serves as cofactor.

The enzyme catalyses N(6)-[(R)-lipoyl]-L-lysyl-[glycine-cleavage complex H protein] + glycine + H(+) = N(6)-[(R)-S(8)-aminomethyldihydrolipoyl]-L-lysyl-[glycine-cleavage complex H protein] + CO2. Functionally, the glycine cleavage system catalyzes the degradation of glycine. The P protein binds the alpha-amino group of glycine through its pyridoxal phosphate cofactor; CO(2) is released and the remaining methylamine moiety is then transferred to the lipoamide cofactor of the H protein. The polypeptide is Glycine dehydrogenase (decarboxylating) (Shewanella putrefaciens (strain CN-32 / ATCC BAA-453)).